A 281-amino-acid chain; its full sequence is Probable superoxide dismutase [Fe] (281 aa).

Fe cation contacts are provided by H104, H152, D236, and H240.

It belongs to the iron/manganese superoxide dismutase family. The cofactor is Fe cation.

The catalysed reaction is 2 superoxide + 2 H(+) = H2O2 + O2. Functionally, destroys superoxide anion radicals which are normally produced within the cells and which are toxic to biological systems. The protein is Probable superoxide dismutase [Fe] (sodF) of Bacillus subtilis (strain 168).